Consider the following 23-residue polypeptide: Thylakoid lumenal 17.4 kDa protein (23 aa).

The tract at residues 1–23 (ANQRLPPLSNDPDRCERAFVGNT) is disordered.

It is found in the plastid. The protein localises to the chloroplast thylakoid lumen. This chain is Thylakoid lumenal 17.4 kDa protein, found in Spinacia oleracea (Spinach).